The sequence spans 507 residues: ATP synthase subunit alpha, chloroplastic (507 aa).

170 to 177 (GDRQTGKT) provides a ligand contact to ATP.

It belongs to the ATPase alpha/beta chains family. In terms of assembly, F-type ATPases have 2 components, CF(1) - the catalytic core - and CF(0) - the membrane proton channel. CF(1) has five subunits: alpha(3), beta(3), gamma(1), delta(1), epsilon(1). CF(0) has four main subunits: a, b, b' and c.

It is found in the plastid. Its subcellular location is the chloroplast thylakoid membrane. It carries out the reaction ATP + H2O + 4 H(+)(in) = ADP + phosphate + 5 H(+)(out). Its function is as follows. Produces ATP from ADP in the presence of a proton gradient across the membrane. The alpha chain is a regulatory subunit. This is ATP synthase subunit alpha, chloroplastic from Citrus sinensis (Sweet orange).